Consider the following 94-residue polypeptide: Co-chaperonin GroES (94 aa).

It belongs to the GroES chaperonin family. As to quaternary structure, heptamer of 7 subunits arranged in a ring. Interacts with the chaperonin GroEL.

The protein resides in the cytoplasm. Its function is as follows. Together with the chaperonin GroEL, plays an essential role in assisting protein folding. The GroEL-GroES system forms a nano-cage that allows encapsulation of the non-native substrate proteins and provides a physical environment optimized to promote and accelerate protein folding. GroES binds to the apical surface of the GroEL ring, thereby capping the opening of the GroEL channel. In Streptococcus pneumoniae (strain CGSP14), this protein is Co-chaperonin GroES.